Here is a 100-residue protein sequence, read N- to C-terminus: Large ribosomal subunit protein bL21 (100 aa).

The protein belongs to the bacterial ribosomal protein bL21 family. As to quaternary structure, part of the 50S ribosomal subunit. Contacts protein L20.

This protein binds to 23S rRNA in the presence of protein L20. The polypeptide is Large ribosomal subunit protein bL21 (Deinococcus deserti (strain DSM 17065 / CIP 109153 / LMG 22923 / VCD115)).